We begin with the raw amino-acid sequence, 522 residues long: Peptide chain release factor 3 (522 aa).

The tr-type G domain maps to 10–277 (ASRKTFAIIS…TFVDFAPSPS (268 aa)). GTP-binding positions include 19–26 (SHPDAGKT), 87–91 (DTPGH), and 141–144 (NKMD).

This sequence belongs to the TRAFAC class translation factor GTPase superfamily. Classic translation factor GTPase family. PrfC subfamily.

The protein resides in the cytoplasm. Its function is as follows. Increases the formation of ribosomal termination complexes and stimulates activities of RF-1 and RF-2. It binds guanine nucleotides and has strong preference for UGA stop codons. It may interact directly with the ribosome. The stimulation of RF-1 and RF-2 is significantly reduced by GTP and GDP, but not by GMP. This chain is Peptide chain release factor 3, found in Listeria monocytogenes serotype 4b (strain CLIP80459).